The primary structure comprises 79 residues: Cell division protein ZapB (79 aa).

The stretch at 4–78 (EVFEKLEAKV…LRALLGKMEE (75 aa)) forms a coiled coil.

This sequence belongs to the ZapB family. Homodimer. The ends of the coiled-coil dimer bind to each other, forming polymers. Interacts with FtsZ.

The protein localises to the cytoplasm. Non-essential, abundant cell division factor that is required for proper Z-ring formation. It is recruited early to the divisome by direct interaction with FtsZ, stimulating Z-ring assembly and thereby promoting cell division earlier in the cell cycle. Its recruitment to the Z-ring requires functional FtsA or ZipA. The chain is Cell division protein ZapB from Erwinia tasmaniensis (strain DSM 17950 / CFBP 7177 / CIP 109463 / NCPPB 4357 / Et1/99).